Consider the following 233-residue polypeptide: TATA-box-binding protein 1 (233 aa).

2 repeat units span residues 58–134 and 148–225.

The protein belongs to the TBP family. In terms of assembly, belongs to the TFIID complex together with the TBP-associated factors (TAFs). Binds DNA as monomer.

It is found in the nucleus. General transcription factor that functions at the core of the DNA-binding multiprotein factor TFIID. Binding of TFIID to the TATA box is the initial transcriptional step of the pre-initiation complex (PIC), playing a role in the activation of eukaryotic genes transcribed by RNA polymerase II. In Triticum aestivum (Wheat), this protein is TATA-box-binding protein 1 (TBP1).